The following is a 1663-amino-acid chain: Glutamine-rich protein 2 (1663 aa).

Disordered regions lie at residues 80–239 (HGGF…LVPA), 423–481 (GLVQ…GTGQ), 575–615 (AQPR…QHGL), 880–925 (TYQQ…QVYP), and 948–984 (RGPG…APGQ). Composition is skewed to polar residues over residues 84–103 (TSLT…QPSI) and 131–150 (GVSS…QQQP). Residues 171 to 182 (SDSDRHRSREKL) are compositionally biased toward basic and acidic residues. Low complexity predominate over residues 206–217 (QPSSVPASQSQV). Residues 958 to 975 (HGQEGLDPNRTRASDRHG) show a composition bias toward basic and acidic residues. 2 coiled-coil regions span residues 1085-1160 (KTVK…MENS) and 1286-1325 (EDHR…KADK). Positions 1609–1619 (TRLPGILRKDS) are enriched in basic and acidic residues. The disordered stretch occupies residues 1609–1663 (TRLPGILRKDSSGTSKRKSQQPRPHVHRPPSLSSNGQLPSRPQSAQISAGNTSER). A compositionally biased stretch (basic residues) spans 1623–1636 (SKRKSQQPRPHVHR). Residues 1639 to 1663 (SLSSNGQLPSRPQSAQISAGNTSER) show a composition bias toward polar residues.

In terms of assembly, interacts with AKAP3, ODF2 and TSSK4. Interacts with AKAP4. In terms of tissue distribution, expressed in the sperm.

The protein resides in the nucleus membrane. It is found in the nucleus. Its subcellular location is the cytoplasm. It localises to the cell projection. The protein localises to the cilium. The protein resides in the flagellum. Its function is as follows. Has an essential role in the formation of sperm flagella and flagellar structure maintainance. It acts as a suppressor of ubiquitination and degradation of proteins involved in flagellar development and motility. This is Glutamine-rich protein 2 (QRICH2) from Homo sapiens (Human).